The chain runs to 339 residues: Fructose-1,6-bisphosphatase class 1 (339 aa).

Positions 91, 113, 115, and 116 each coordinate Mg(2+). Substrate contacts are provided by residues Asp-116–Ser-119, Asn-210, and Lys-276. A Mg(2+)-binding site is contributed by Glu-282.

It belongs to the FBPase class 1 family. In terms of assembly, homotetramer. The cofactor is Mg(2+).

Its subcellular location is the cytoplasm. It catalyses the reaction beta-D-fructose 1,6-bisphosphate + H2O = beta-D-fructose 6-phosphate + phosphate. Its pathway is carbohydrate biosynthesis; gluconeogenesis. The sequence is that of Fructose-1,6-bisphosphatase class 1 from Bordetella bronchiseptica (strain ATCC BAA-588 / NCTC 13252 / RB50) (Alcaligenes bronchisepticus).